Reading from the N-terminus, the 469-residue chain is Protein RdxA (469 aa).

Topologically, residues 1 to 23 (MSEPLYAPRTPIFPRQISGAFRT) are cytoplasmic. The chain crosses the membrane as a helical span at residues 24-44 (AKWWILAVSLGIYLLTPWLRW). The Periplasmic segment spans residues 45–75 (DRGPNLPDQAVLIDIAGRRFFLFGIQIWPHE). A helical transmembrane segment spans residues 76-96 (FYFVAGLLIMAGLGLFLFTSA). The Cytoplasmic segment spans residues 97-149 (AGRVWCGYACPQTVWTDLFLLVERRIEGDRNAQIRLHRQAWTAEKVWKRLLKW). Residues 150 to 170 (SVWAAISLLTGGAWVFYFADA) form a helical membrane-spanning segment. At 171–183 (PTLLNGLVTLTAH) the chain is on the periplasmic side. Residues 184–204 (PVAWITIFVLTATTFVFAGFM) form a helical membrane-spanning segment. Over 205-327 (REQICIYACP…PAWRRLFRLR (123 aa)) the chain is Cytoplasmic. 4Fe-4S ferredoxin-type domains are found at residues 242–270 (KRSE…IREG) and 266–295 (DIRE…IGRP). Residues Cys251, Cys254, Cys257, Cys261, Cys275, Cys278, Cys281, and Cys285 each coordinate [4Fe-4S] cluster. The chain crosses the membrane as a helical span at residues 328-348 (TSLYAVLWAGVGVTLIAALLL). The Periplasmic segment spans residues 349–469 (RPAVDLAVTP…VKAAFHGARS (121 aa)).

The protein localises to the cell membrane. Functionally, predicted to be involved in a redox process. In Cereibacter sphaeroides (strain ATCC 17023 / DSM 158 / JCM 6121 / CCUG 31486 / LMG 2827 / NBRC 12203 / NCIMB 8253 / ATH 2.4.1.) (Rhodobacter sphaeroides), this protein is Protein RdxA (rdxA).